We begin with the raw amino-acid sequence, 307 residues long: GTPase Era (307 aa).

One can recognise an Era-type G domain in the interval 7–181; sequence RCGWVALMGP…VELIRKKLPK (175 aa). The tract at residues 15 to 22 is G1; that stretch reads GPPNAGKS. 15 to 22 provides a ligand contact to GTP; it reads GPPNAGKS. Residues 41–45 are G2; the sequence is QTTRN. Residues 62 to 65 are G3; that stretch reads DTPG. GTP contacts are provided by residues 62–66 and 130–133; these read DTPGL and NKVD. The interval 130–133 is G4; it reads NKVD. The tract at residues 160-162 is G5; that stretch reads ISA. Positions 212-290 constitute a KH type-2 domain; it reads LRQEVPYSVA…HLELWVKVRE (79 aa).

The protein belongs to the TRAFAC class TrmE-Era-EngA-EngB-Septin-like GTPase superfamily. Era GTPase family. As to quaternary structure, monomer.

It is found in the cytoplasm. It localises to the cell inner membrane. An essential GTPase that binds both GDP and GTP, with rapid nucleotide exchange. Plays a role in 16S rRNA processing and 30S ribosomal subunit biogenesis and possibly also in cell cycle regulation and energy metabolism. This is GTPase Era from Desulfovibrio desulfuricans (strain ATCC 27774 / DSM 6949 / MB).